Reading from the N-terminus, the 81-residue chain is Photosystem I iron-sulfur center (81 aa).

4Fe-4S ferredoxin-type domains are found at residues Met1–Trp31 and Ile39–Tyr68. The [4Fe-4S] cluster site is built by Cys11, Cys14, Cys17, Cys21, Cys48, Cys51, Cys54, and Cys58.

As to quaternary structure, the cyanobacterial PSI reaction center is composed of one copy each of PsaA,B,C,D,E,F,I,J,K,L,M and X, and forms trimeric complexes. [4Fe-4S] cluster is required as a cofactor.

The protein resides in the cellular thylakoid membrane. It carries out the reaction reduced [plastocyanin] + hnu + oxidized [2Fe-2S]-[ferredoxin] = oxidized [plastocyanin] + reduced [2Fe-2S]-[ferredoxin]. Functionally, apoprotein for the two 4Fe-4S centers FA and FB of photosystem I (PSI); essential for photochemical activity. FB is the terminal electron acceptor of PSI, donating electrons to ferredoxin. The C-terminus interacts with PsaA/B/D and helps assemble the protein into the PSI complex. Required for binding of PsaD and PsaE to PSI. PSI is a plastocyanin/cytochrome c6-ferredoxin oxidoreductase, converting photonic excitation into a charge separation, which transfers an electron from the donor P700 chlorophyll pair to the spectroscopically characterized acceptors A0, A1, FX, FA and FB in turn. The chain is Photosystem I iron-sulfur center from Microcystis aeruginosa (strain NIES-843 / IAM M-2473).